Reading from the N-terminus, the 292-residue chain is AT-hook motif nuclear-localized protein 23 (292 aa).

The tract at residues 23 to 100 is disordered; the sequence is HLHHNSSSDD…SKNKPKPPVI (78 aa). Residues 60-79 show a composition bias toward gly residues; that stretch reads SGGGSGSSGGGGGHGGGGDV. The a.T hook DNA-binding region spans 82–94; the sequence is RRPRGRPPGSKNK. Residues 106–242 form the PPC domain; it reads ANTLRAHILE…EDEQQQQLGG (137 aa).

The protein localises to the nucleus. Functionally, transcription factor that specifically binds AT-rich DNA sequences related to the nuclear matrix attachment regions (MARs). The polypeptide is AT-hook motif nuclear-localized protein 23 (Arabidopsis thaliana (Mouse-ear cress)).